The sequence spans 76 residues: Kappa-scoloptoxin(15)-Ssd3a (76 aa).

Positions 1–23 (MEGKIIFICFLVVLLTLPELISS) are cleaved as a signal peptide.

Post-translationally, contains 2 disulfide bonds. Expressed by the venom gland.

The protein resides in the secreted. Its function is as follows. Acts as a voltage-gated potassium channel inhibitor. This chain is Kappa-scoloptoxin(15)-Ssd3a, found in Scolopendra dehaani (Thai centipede).